The primary structure comprises 766 residues: 5-methyltetrahydropteroyltriglutamate--homocysteine methyltransferase (766 aa).

Residues 23–26 (RELK) and Lys-121 each bind 5-methyltetrahydropteroyltri-L-glutamate. L-homocysteine-binding positions include 438–440 (IGS) and Glu-491. L-methionine contacts are provided by residues 438–440 (IGS) and Glu-491. 5-methyltetrahydropteroyltri-L-glutamate-binding positions include 522–523 (RC) and Trp-568. Asp-606 is an L-homocysteine binding site. Residue Asp-606 participates in L-methionine binding. Glu-612 contributes to the 5-methyltetrahydropteroyltri-L-glutamate binding site. Residues His-648, Cys-650, and Glu-672 each contribute to the Zn(2+) site. The active-site Proton donor is His-701. Cys-733 lines the Zn(2+) pocket.

This sequence belongs to the vitamin-B12 independent methionine synthase family. The cofactor is Zn(2+).

The catalysed reaction is 5-methyltetrahydropteroyltri-L-glutamate + L-homocysteine = tetrahydropteroyltri-L-glutamate + L-methionine. The protein operates within amino-acid biosynthesis; L-methionine biosynthesis via de novo pathway; L-methionine from L-homocysteine (MetE route): step 1/1. In terms of biological role, catalyzes the transfer of a methyl group from 5-methyltetrahydrofolate to homocysteine resulting in methionine formation. In Photobacterium profundum (strain SS9), this protein is 5-methyltetrahydropteroyltriglutamate--homocysteine methyltransferase.